Reading from the N-terminus, the 499-residue chain is Guanosine-5'-triphosphate,3'-diphosphate pyrophosphatase (499 aa).

It belongs to the GppA/Ppx family. GppA subfamily.

The enzyme catalyses guanosine 3'-diphosphate 5'-triphosphate + H2O = guanosine 3',5'-bis(diphosphate) + phosphate + H(+). It participates in purine metabolism; ppGpp biosynthesis; ppGpp from GTP: step 2/2. Functionally, catalyzes the conversion of pppGpp to ppGpp. Guanosine pentaphosphate (pppGpp) is a cytoplasmic signaling molecule which together with ppGpp controls the 'stringent response', an adaptive process that allows bacteria to respond to amino acid starvation, resulting in the coordinated regulation of numerous cellular activities. The sequence is that of Guanosine-5'-triphosphate,3'-diphosphate pyrophosphatase from Klebsiella pneumoniae subsp. pneumoniae (strain ATCC 700721 / MGH 78578).